The primary structure comprises 213 residues: BREX protein BrxA (213 aa).

It belongs to the BrxA family.

BREX systems (bacteriophage exclusion) provide immunity against bacteriophage. A probably non-essential part of a type 1 BREX system which protects against dsDNA phage. This system allows phage adsorption but prevents phage DNA replication, without degradation of the phage DNA. Methylation of bacterial DNA by PglX guides self/non-self discrimination. When the brxA-brxB-brxC-pglX-pglZ-brxL genes are transformed into a susceptible E.coli strain (BW25113) they confer very high resistance to infection by bacteriophage VR7 and VpaE1, about 100-fold protection against lambda, T5 and T7 and no protection against RNA phage Qbeta, ssDNA phage M13 or dSDNA phage T4 and VR5. Glycosylated phage DNA is not susceptible to BREX. The BREX system does not confer resistance to lysogenic lambda phage, i.e. prophage that are integrated into the chromosomal DNA and then induced to form phage. In Escherichia coli O9:H4 (strain HS), this protein is BREX protein BrxA.